A 350-amino-acid chain; its full sequence is Probable arabinogalactan endo-beta-1,4-galactanase A (350 aa).

A signal peptide spans 1–16 (MIYPLLLSALPLLSSA). N-linked (GlcNAc...) asparagine glycosylation occurs at Asn-128. The active-site Proton donor is Glu-152. The Nucleophile role is filled by Glu-262.

This sequence belongs to the glycosyl hydrolase 53 family.

The protein resides in the secreted. It catalyses the reaction The enzyme specifically hydrolyzes (1-&gt;4)-beta-D-galactosidic linkages in type I arabinogalactans.. Its function is as follows. Endogalactanase involved in the degradation of plant cell wall polysaccharides, and more particularly of hairy regions of pectin. The polypeptide is Probable arabinogalactan endo-beta-1,4-galactanase A (galA) (Aspergillus tubingensis).